A 156-amino-acid polypeptide reads, in one-letter code: Ribonuclease 1B pancreatic (156 aa).

An N-terminal signal peptide occupies residues methionine 1–glycine 28. The substrate site is built by lysine 35 and arginine 38. The active-site Proton acceptor is the histidine 40. Intrachain disulfides connect cysteine 54–cysteine 112, cysteine 68–cysteine 123, cysteine 86–cysteine 138, and cysteine 93–cysteine 100. A glycan (N-linked (GlcNAc...) asparagine) is linked at asparagine 62. Residues lysine 69–threonine 73, lysine 94, and arginine 113 contribute to the substrate site. Residue asparagine 116 is glycosylated (N-linked (GlcNAc...) asparagine). Histidine 147 functions as the Proton donor in the catalytic mechanism.

The protein belongs to the pancreatic ribonuclease family. As to quaternary structure, monomer.

Its subcellular location is the secreted. The enzyme catalyses an [RNA] containing cytidine + H2O = an [RNA]-3'-cytidine-3'-phosphate + a 5'-hydroxy-ribonucleotide-3'-[RNA].. The catalysed reaction is an [RNA] containing uridine + H2O = an [RNA]-3'-uridine-3'-phosphate + a 5'-hydroxy-ribonucleotide-3'-[RNA].. Endonuclease that catalyzes the cleavage of RNA on the 3' side of pyrimidine nucleotides. Compared to RNASE1 it has lost activity towards dsRNA. This is Ribonuclease 1B pancreatic (RNASE1B) from Pygathrix nemaeus (Red-shanked douc langur).